A 51-amino-acid polypeptide reads, in one-letter code: Large ribosomal subunit protein eL39 (51 aa).

The disordered stretch occupies residues 1 to 23 (MSALKKSFIKRKLAKKQKQNRPM). A compositionally biased stretch (basic residues) spans 7–19 (SFIKRKLAKKQKQ).

This sequence belongs to the eukaryotic ribosomal protein eL39 family. As to quaternary structure, interacts with impact.

The chain is Large ribosomal subunit protein eL39 (rpl-39) from Caenorhabditis elegans.